The chain runs to 474 residues: Viral protein TPX (474 aa).

The tract at residues 268–474 (VTVTPISSPS…TPTSTTSSNI (207 aa)) is disordered. Residues 275–365 (SPSPTPTPTP…PTPTPTPTPT (91 aa)) are compositionally biased toward pro residues. The stretch at 278 to 367 (PTPTPTPTPT…PTPTPTPTPT (90 aa)) is one Thr-Pro(N) repeat. Residues 278 to 467 (PTPTPTPTPT…PTPTPTPTPT (190 aa)) form a 3 Thr-Pro repeats regions and two near identical repeats region. Residues 368–377 (YDITYVVFDV) constitute a repeat. One copy of the Thr-Pro(N) repeat lies at 378-436 (TPSPTPTPTPTPTPTPTPTPTPTPTPTPTPTPTPTPTPTPTPTPTPTPTPTPTPTPTPT). Residues 380 to 434 (SPTPTPTPTPTPTPTPTPTPTPTPTPTPTPTPTPTPTPTPTPTPTPTPTPTPTPT) are compositionally biased toward pro residues. Positions 437-446 (YDITYVIFDV) form a repeat. The Thr-Pro(N) repeat unit spans residues 447–467 (TPSPTPTPTPTPTPTPTPTPT). Positions 449-465 (SPTPTPTPTPTPTPTPT) are enriched in pro residues.

This Thermoproteus tenax virus 1 (strain VT3) (TTV1) protein is Viral protein TPX.